The primary structure comprises 481 residues: Beta-amyrin 28-monooxygenase (481 aa).

Residues 4-24 traverse the membrane as a helical segment; it reads FYVPLLSLFVLFVSLSFYFLF. Cys-428 contributes to the heme binding site.

The protein belongs to the cytochrome P450 family. Heme is required as a cofactor.

The protein localises to the membrane. It carries out the reaction beta-amyrin + 3 reduced [NADPH--hemoprotein reductase] + 3 O2 = oleanolate + 3 oxidized [NADPH--hemoprotein reductase] + 4 H2O + 4 H(+). Functionally, catalyzes the oxidation of the methyl group to a carboxyl group at the C-28 position of beta-amyrin to form oleanolate. The sequence is that of Beta-amyrin 28-monooxygenase from Kalopanax septemlobus (Castor aralia).